Here is a 458-residue protein sequence, read N- to C-terminus: Ig mu chain C region secreted form (458 aa).

The tract at residues 1–106 is CH1; sequence VSLSSPTLYP…SNRDLRVSFP (106 aa). Cysteines 28 and 90 form a disulfide. N-linked (GlcNAc...) asparagine glycosylation is found at asparagine 46 and asparagine 114. The interval 107 to 222 is CH2; that stretch reads VDSELPPNVS…VSMSSECSTT (116 aa). A disulfide bridge links cysteine 137 with cysteine 200. 4 N-linked (GlcNAc...) asparagine glycosylation sites follow: asparagine 212, asparagine 261, asparagine 277, and asparagine 284. The interval 223–327 is CH3; sequence PSPGIQVFPI…PLKHTISKSR (105 aa). Disulfide bonds link cysteine 249–cysteine 308 and cysteine 356–cysteine 418. A CH4 region spans residues 328–458; that stretch reads EVAKHPPAVY…IMSDTASTCY (131 aa). An N-linked (GlcNAc...) asparagine glycan is attached at asparagine 445.

The protein resides in the secreted. The sequence is that of Ig mu chain C region secreted form from Oryctolagus cuniculus (Rabbit).